The following is a 545-amino-acid chain: CTP synthase (545 aa).

The amidoligase domain stretch occupies residues M1–L265. S15 serves as a coordination point for CTP. S15 contributes to the UTP binding site. Residues S16–L21 and D73 each bind ATP. Residues D73 and E141 each contribute to the Mg(2+) site. Residues D148–E150, K188–Q193, and K224 contribute to the CTP site. UTP is bound by residues K188–Q193 and K224. The 245-residue stretch at E290 to I534 folds into the Glutamine amidotransferase type-1 domain. G349 contacts L-glutamine. Residue C376 is the Nucleophile; for glutamine hydrolysis of the active site. Residues L377–Q380, E400, and R460 contribute to the L-glutamine site. Active-site residues include H507 and E509.

This sequence belongs to the CTP synthase family. As to quaternary structure, homotetramer.

It carries out the reaction UTP + L-glutamine + ATP + H2O = CTP + L-glutamate + ADP + phosphate + 2 H(+). The catalysed reaction is L-glutamine + H2O = L-glutamate + NH4(+). The enzyme catalyses UTP + NH4(+) + ATP = CTP + ADP + phosphate + 2 H(+). It functions in the pathway pyrimidine metabolism; CTP biosynthesis via de novo pathway; CTP from UDP: step 2/2. Its activity is regulated as follows. Allosterically activated by GTP, when glutamine is the substrate; GTP has no effect on the reaction when ammonia is the substrate. The allosteric effector GTP functions by stabilizing the protein conformation that binds the tetrahedral intermediate(s) formed during glutamine hydrolysis. Inhibited by the product CTP, via allosteric rather than competitive inhibition. In terms of biological role, catalyzes the ATP-dependent amination of UTP to CTP with either L-glutamine or ammonia as the source of nitrogen. Regulates intracellular CTP levels through interactions with the four ribonucleotide triphosphates. The sequence is that of CTP synthase from Tropheryma whipplei (strain TW08/27) (Whipple's bacillus).